The following is a 295-amino-acid chain: Sulfotransferase 1A1 (295 aa).

48–53 (KSGTTW) contributes to the 3'-phosphoadenylyl sulfate binding site. Position 106 to 108 (106 to 108 (KTH)) interacts with substrate. Residue His-108 is the Proton acceptor of the active site. 3'-phosphoadenylyl sulfate contacts are provided by residues Arg-130, Ser-138, Tyr-193, 227–232 (TSFKEM), and 255–259 (FMRKG). Ser-138 bears the Phosphoserine mark.

Belongs to the sulfotransferase 1 family. In terms of assembly, homodimer. In terms of tissue distribution, ubiquitously expressed in canine tissues with highest expression in male and female liver.

The protein localises to the cytoplasm. The catalysed reaction is a phenol + 3'-phosphoadenylyl sulfate = an aryl sulfate + adenosine 3',5'-bisphosphate + H(+). It carries out the reaction 17beta-estradiol + 3'-phosphoadenylyl sulfate = 17beta-estradiol 3-sulfate + adenosine 3',5'-bisphosphate + H(+). It catalyses the reaction 4-ethylphenol + 3'-phosphoadenylyl sulfate = 4-ethylphenyl sulfate + adenosine 3',5'-bisphosphate + H(+). The enzyme catalyses 4-nitrophenol + 3'-phosphoadenylyl sulfate = 4-nitrophenyl sulfate + adenosine 3',5'-bisphosphate. The catalysed reaction is dopamine + 3'-phosphoadenylyl sulfate = dopamine 3-O-sulfate + adenosine 3',5'-bisphosphate + H(+). It carries out the reaction dopamine + 3'-phosphoadenylyl sulfate = dopamine 4-O-sulfate + adenosine 3',5'-bisphosphate + H(+). It catalyses the reaction 3,3',5-triiodo-L-thyronine + 3'-phosphoadenylyl sulfate = 3,3',5-triiodo-L-thyronine sulfate + adenosine 3',5'-bisphosphate + H(+). The enzyme catalyses 3,3',5'-triiodo-L-thyronine + 3'-phosphoadenylyl sulfate = 3,3',5'-triiodo-L-thyronine sulfate + adenosine 3',5'-bisphosphate + H(+). The catalysed reaction is 3,3'-diiodo-L-thyronine + 3'-phosphoadenylyl sulfate = 3,3'-diiodo-L-thyronine sulfate + adenosine 3',5'-bisphosphate + H(+). It carries out the reaction L-thyroxine + 3'-phosphoadenylyl sulfate = L-thyroxine sulfate + adenosine 3',5'-bisphosphate + H(+). In terms of biological role, sulfotransferase that utilizes 3'-phospho-5'-adenylyl sulfate (PAPS) as sulfonate donor to catalyze the sulfate conjugation of a wide variety of acceptor molecules bearing a hydroxyl or an amine group. Sulfonation increases the water solubility of most compounds, and therefore their renal excretion, but it can also result in bioactivation to form active metabolites. Displays broad substrate specificity for small phenolic compounds. Plays an important role in the sulfonation of endogenous molecules such as steroid hormones. Mediates also the metabolic activation of carcinogenic N-hydroxyarylamines leading to highly reactive intermediates capable of forming DNA adducts, potentially resulting in mutagenesis. May play a role in gut microbiota-host metabolic interaction. O-sulfonates 4-ethylphenol (4-EP), a dietary tyrosine-derived metabolite produced by gut bacteria. The product 4-EPS crosses the blood-brain barrier and may negatively regulate oligodendrocyte maturation and myelination, affecting the functional connectivity of different brain regions associated with the limbic system. Catalyzes the sulfate conjugation of dopamine. Catalyzes the sulfation of T4 (L-thyroxine/3,5,3',5'-tetraiodothyronine), T3 (3,5,3'-triiodothyronine), rT3 (3,3',5'-triiodothyronine) and 3,3'-T2 (3,3'-diiodothyronine), with a substrate preference of 3,3'-T2 &gt; rT3 &gt; T3 &gt; T4. The protein is Sulfotransferase 1A1 (SULT1A1) of Canis lupus familiaris (Dog).